The primary structure comprises 240 residues: Adenylate dimethylallyltransferase (240 aa).

It belongs to the isopentenyl transferase family.

It catalyses the reaction dimethylallyl diphosphate + AMP = N(6)-(dimethylallyl)adenosine 5'-phosphate + diphosphate. Functionally, transfers dimethylallyl groups to AMP as part of the biosynthesis of cytokinin phytohormones. This is Adenylate dimethylallyltransferase (ipt) from Agrobacterium vitis (Rhizobium vitis).